The following is a 235-amino-acid chain: Biosynthetic peptidoglycan transglycosylase (235 aa).

A helical transmembrane segment spans residues 12-34 (GLGKLLLAALLSTIVSVALLRFI).

Belongs to the glycosyltransferase 51 family.

It localises to the cell inner membrane. The catalysed reaction is [GlcNAc-(1-&gt;4)-Mur2Ac(oyl-L-Ala-gamma-D-Glu-L-Lys-D-Ala-D-Ala)](n)-di-trans,octa-cis-undecaprenyl diphosphate + beta-D-GlcNAc-(1-&gt;4)-Mur2Ac(oyl-L-Ala-gamma-D-Glu-L-Lys-D-Ala-D-Ala)-di-trans,octa-cis-undecaprenyl diphosphate = [GlcNAc-(1-&gt;4)-Mur2Ac(oyl-L-Ala-gamma-D-Glu-L-Lys-D-Ala-D-Ala)](n+1)-di-trans,octa-cis-undecaprenyl diphosphate + di-trans,octa-cis-undecaprenyl diphosphate + H(+). It functions in the pathway cell wall biogenesis; peptidoglycan biosynthesis. Functionally, peptidoglycan polymerase that catalyzes glycan chain elongation from lipid-linked precursors. This is Biosynthetic peptidoglycan transglycosylase from Aeromonas hydrophila subsp. hydrophila (strain ATCC 7966 / DSM 30187 / BCRC 13018 / CCUG 14551 / JCM 1027 / KCTC 2358 / NCIMB 9240 / NCTC 8049).